Here is a 516-residue protein sequence, read N- to C-terminus: Levanbiose-producing levanase (516 aa).

The Cytoplasmic segment spans residues 1–5 (MNYIK). A helical membrane pass occupies residues 6–26 (AGKWLTVFLTFLGILLFIDLF). The Extracellular segment spans residues 27–516 (PKEEHDQKTK…TVKHFDSIHE (490 aa)). Substrate is bound by residues 55-58 (WKND), 116-117 (WT), 181-182 (RD), E230, and W318. The active site involves D58.

This sequence belongs to the glycosyl hydrolase 32 family.

The protein localises to the cell membrane. The catalysed reaction is Hydrolysis of (2-&gt;6)-beta-D-fructofuranan, to remove successive disaccharide residues as levanbiose, i.e. 6-(beta-D-fructofuranosyl)-D-fructose, from the end of the chain.. Its function is as follows. Catalyzes the degradation of levan mainly into levanbiose (difructose). Is not active on sucrose. The chain is Levanbiose-producing levanase (levB) from Bacillus subtilis (strain 168).